The chain runs to 182 residues: ATP synthase subunit delta (182 aa).

Belongs to the ATPase delta chain family. As to quaternary structure, F-type ATPases have 2 components, F(1) - the catalytic core - and F(0) - the membrane proton channel. F(1) has five subunits: alpha(3), beta(3), gamma(1), delta(1), epsilon(1). F(0) has three main subunits: a(1), b(2) and c(10-14). The alpha and beta chains form an alternating ring which encloses part of the gamma chain. F(1) is attached to F(0) by a central stalk formed by the gamma and epsilon chains, while a peripheral stalk is formed by the delta and b chains.

Its subcellular location is the cell membrane. F(1)F(0) ATP synthase produces ATP from ADP in the presence of a proton or sodium gradient. F-type ATPases consist of two structural domains, F(1) containing the extramembraneous catalytic core and F(0) containing the membrane proton channel, linked together by a central stalk and a peripheral stalk. During catalysis, ATP synthesis in the catalytic domain of F(1) is coupled via a rotary mechanism of the central stalk subunits to proton translocation. Functionally, this protein is part of the stalk that links CF(0) to CF(1). It either transmits conformational changes from CF(0) to CF(1) or is implicated in proton conduction. In Lachnoclostridium phytofermentans (strain ATCC 700394 / DSM 18823 / ISDg) (Clostridium phytofermentans), this protein is ATP synthase subunit delta.